We begin with the raw amino-acid sequence, 476 residues long: Proline--tRNA ligase (476 aa).

The protein belongs to the class-II aminoacyl-tRNA synthetase family. ProS type 3 subfamily. In terms of assembly, homodimer.

The protein resides in the cytoplasm. It carries out the reaction tRNA(Pro) + L-proline + ATP = L-prolyl-tRNA(Pro) + AMP + diphosphate. Its function is as follows. Catalyzes the attachment of proline to tRNA(Pro) in a two-step reaction: proline is first activated by ATP to form Pro-AMP and then transferred to the acceptor end of tRNA(Pro). In Rubrobacter xylanophilus (strain DSM 9941 / JCM 11954 / NBRC 16129 / PRD-1), this protein is Proline--tRNA ligase.